We begin with the raw amino-acid sequence, 184 residues long: MSTPPLSGPGMGAAAGPGGFPGAQAATAAREVNTASLCRIGQETVQDIVFRTMEIFQLLRNMQLPNGVTYHTVTYQDRLGKLQEHLRQLSILFRKLRLVYDKCNENCAGLDPVPIEQLIPYVEEEYSKHDDRGIASQLRFASEEKREILEVNKKLKQKNQQLKQIMDQLRNLIWDINSMLAMRN.

Residues 136–179 (SQLRFASEEKREILEVNKKLKQKNQQLKQIMDQLRNLIWDINSM) are a coiled coil.

It belongs to the Mediator complex subunit 30 family. In terms of assembly, component of the Mediator complex.

It localises to the nucleus. Functionally, component of the Mediator complex, a coactivator involved in the regulated transcription of nearly all RNA polymerase II-dependent genes. Mediator functions as a bridge to convey information from gene-specific regulatory proteins to the basal RNA polymerase II transcription machinery. Mediator is recruited to promoters by direct interactions with regulatory proteins and serves as a scaffold for the assembly of a functional preinitiation complex with RNA polymerase II and the general transcription factors. This is Mediator of RNA polymerase II transcription subunit 30 (med30) from Xenopus laevis (African clawed frog).